The sequence spans 73 residues: Toxin Td9 (73 aa).

An N-terminal signal peptide occupies residues 1-7; the sequence is IGMVAEC. The LCN-type CS-alpha/beta domain maps to 8-70; it reads KDGYLVGDDG…IWNSATNSCG (63 aa). 4 cysteine pairs are disulfide-bonded: Cys18–Cys69, Cys22–Cys44, Cys30–Cys50, and Cys34–Cys52. Residue Lys71 is modified to Lysine amide.

It belongs to the long (4 C-C) scorpion toxin superfamily. Sodium channel inhibitor family. Beta subfamily. As to expression, expressed by the venom gland.

The protein localises to the secreted. Its function is as follows. Beta toxins bind voltage-independently at site-4 of sodium channels (Nav) and shift the voltage of activation toward more negative potentials thereby affecting sodium channel activation and promoting spontaneous and repetitive firing. The sequence is that of Toxin Td9 from Tityus discrepans (Venezuelan scorpion).